Here is a 513-residue protein sequence, read N- to C-terminus: Maturase K (513 aa).

This sequence belongs to the intron maturase 2 family. MatK subfamily.

It is found in the plastid. Its subcellular location is the chloroplast. Usually encoded in the trnK tRNA gene intron. Probably assists in splicing its own and other chloroplast group II introns. The chain is Maturase K from Cynodon dactylon (Bermuda grass).